The sequence spans 143 residues: Large ribosomal subunit protein uL11 (143 aa).

It belongs to the universal ribosomal protein uL11 family. As to quaternary structure, part of the ribosomal stalk of the 50S ribosomal subunit. Interacts with L10 and the large rRNA to form the base of the stalk. L10 forms an elongated spine to which L12 dimers bind in a sequential fashion forming a multimeric L10(L12)X complex. In terms of processing, one or more lysine residues are methylated.

Its function is as follows. Forms part of the ribosomal stalk which helps the ribosome interact with GTP-bound translation factors. The chain is Large ribosomal subunit protein uL11 from Clavibacter michiganensis subsp. michiganensis (strain NCPPB 382).